The following is a 43-amino-acid chain: Hemolysin H3C (43 aa).

Residue methionine 1 is modified to N-formylmethionine.

Belongs to the staphylococcal hemolytic protein family.

It localises to the secreted. Its function is as follows. Virulence factor. Causes hemolysis of erythrocytes from sheep (HD(50)=2.63 mM), rabbit (HD(50)=2.37 mM), guinea pig (HD(50)=1.98 mM), dog (HD(50)=1.02 mM) and human (HD(50)=2.07 mM). Acts synergistically with beta-hemolysins from S.aureus ATCC 25923. Cytotoxic towards human dermal fibroblasts. This is Hemolysin H3C from Staphylococcus cohnii subsp. cohnii.